A 1882-amino-acid polypeptide reads, in one-letter code: uncharacterized protein (1882 aa).

A helical transmembrane segment spans residues 16–36 (FFLLFGIIFVLFSIIFLETSI). Disordered regions lie at residues 103 to 129 (DFGS…DVND), 220 to 306 (FPGD…ESET), 492 to 513 (VALA…VKDP), and 658 to 698 (QTDE…TKST). The segment covering 221 to 239 (PGDKGKGEDKKTTKKKSEI) has biased composition (basic and acidic residues). Over residues 240-249 (KQASSATTVL) the composition is skewed to polar residues. Basic and acidic residues-rich tracts occupy residues 259 to 275 (TDAK…KDSN), 284 to 294 (NKDKVWFKSDE), and 500 to 511 (DKQESSADDGVK). A compositionally biased stretch (low complexity) spans 667-698 (AKTTQGTTDSLTQLADASSSSSSSSTGDTKST). 4 helical membrane-spanning segments follow: residues 987-1007 (ASVV…ILLI), 1037-1057 (VFAG…AFLL), 1080-1100 (WISF…ISWI), and 1154-1174 (LFTY…AGTI). Disordered stretches follow at residues 1233 to 1253 (DQIQ…EHPY) and 1572 to 1598 (KDGQ…TSST). Positions 1234–1245 (QIQQQQQQQQQQ) are enriched in low complexity. Over residues 1583–1594 (TSSGGGSCGGGS) the composition is skewed to gly residues. Helical transmembrane passes span 1759-1779 (FLLG…GISM), 1807-1827 (FFIP…AGLL), 1828-1848 (VGVQ…VFEF), and 1851-1871 (YMVG…YFWI).

The protein belongs to the ABC-4 integral membrane protein family.

The protein localises to the cell membrane. This is an uncharacterized protein from Mycoplasma pneumoniae (strain ATCC 29342 / M129 / Subtype 1) (Mycoplasmoides pneumoniae).